The following is a 656-amino-acid chain: Nexilin (656 aa).

3 disordered regions span residues 1 to 131 (MNDV…IEQD), 165 to 198 (RAAA…EEEC), and 215 to 284 (TEAK…VFKE). Over residues 11-26 (LLSSSKPVPKSYVPKL) the composition is skewed to low complexity. Basic and acidic residues predominate over residues 27–78 (GKGDVKDKFEAMQRAREERNQRRSRDEKQRRKEQYIREREWNRRKQEIKDML). Residue Ser80 is modified to Phosphoserine. 3 stretches are compositionally biased toward basic and acidic residues: residues 103–131 (GKFD…IEQD), 169–198 (NRKD…EEEC), and 216–269 (EAKK…RNMV). A phosphoserine mark is found at Ser221, Ser330, Ser337, and Ser345. A Phosphothreonine modification is found at Thr350. 2 disordered regions span residues 468–492 (NFHE…HKVN) and 529–564 (AALQ…APWF). Phosphoserine occurs at positions 544 and 549. A Phosphothreonine modification is found at Thr551. The Ig-like domain occupies 562-650 (PWFKKPLRNT…GSAASTCILT (89 aa)).

In terms of assembly, interacts with F-actin. As to expression, expressed in brain, testis, spleen and fibroblasts (at protein level). Not detected in liver, kidney or epithelial cells (at protein level).

The protein localises to the cytoplasm. Its subcellular location is the cytoskeleton. It is found in the cell junction. It localises to the adherens junction. The protein resides in the myofibril. The protein localises to the sarcomere. Its subcellular location is the z line. Involved in regulating cell migration through association with the actin cytoskeleton. Has an essential role in the maintenance of Z line and sarcomere integrity. This is Nexilin from Rattus norvegicus (Rat).